A 546-amino-acid polypeptide reads, in one-letter code: Probable protein kinase UbiB (546 aa).

One can recognise a Protein kinase domain in the interval 124-502 (DFDIKPLASA…QARQGQSRYL (379 aa)). Residues 130–138 (LASASIAQV) and Lys153 contribute to the ATP site. Asp288 functions as the Proton acceptor in the catalytic mechanism. The next 2 membrane-spanning stretches (helical) occupy residues 499–519 (SRYLLGIGATLLISGTLLLIS) and 521–541 (VEADMVPAGLMAAGIVTWIIG).

This sequence belongs to the ABC1 family. UbiB subfamily.

The protein resides in the cell inner membrane. It participates in cofactor biosynthesis; ubiquinone biosynthesis [regulation]. Is probably a protein kinase regulator of UbiI activity which is involved in aerobic coenzyme Q (ubiquinone) biosynthesis. The polypeptide is Probable protein kinase UbiB (Pectobacterium carotovorum subsp. carotovorum (strain PC1)).